Reading from the N-terminus, the 118-residue chain is Cell division protein FtsB (118 aa).

The Cytoplasmic segment spans residues 1–3; sequence MRL. Residues 4–21 traverse the membrane as a helical segment; it reads LFLVLLVLLGLIQYPLWL. Topologically, residues 22-118 are periplasmic; it reads GKGGWFKVWD…PRPPATPPRR (97 aa). The stretch at 28–62 forms a coiled coil; the sequence is KVWDLQRQVAEQRETNDGLRARNTALEAEVRDLAT. Residues 88 to 118 form a disordered region; sequence LPPGTPLPSDNSTPQASALSKPRPPATPPRR. A compositionally biased stretch (polar residues) spans 95 to 105; sequence PSDNSTPQASA. Positions 109 to 118 are enriched in pro residues; it reads PRPPATPPRR.

It belongs to the FtsB family. As to quaternary structure, part of a complex composed of FtsB, FtsL and FtsQ.

It localises to the cell inner membrane. In terms of biological role, essential cell division protein. May link together the upstream cell division proteins, which are predominantly cytoplasmic, with the downstream cell division proteins, which are predominantly periplasmic. In Bordetella bronchiseptica (strain ATCC BAA-588 / NCTC 13252 / RB50) (Alcaligenes bronchisepticus), this protein is Cell division protein FtsB.